A 273-amino-acid chain; its full sequence is Dermonecrotic toxin LarSicTox-alphaVII1 (273 aa).

Residue histidine 5 is part of the active site. Mg(2+) is bound by residues glutamate 25 and aspartate 27. Histidine 41 serves as the catalytic Nucleophile. Disulfide bonds link cysteine 45-cysteine 51 and cysteine 47-cysteine 192. Residue aspartate 85 participates in Mg(2+) binding.

This sequence belongs to the arthropod phospholipase D family. Class II subfamily. Requires Mg(2+) as cofactor. As to expression, expressed by the venom gland.

The protein resides in the secreted. It catalyses the reaction an N-(acyl)-sphingosylphosphocholine = an N-(acyl)-sphingosyl-1,3-cyclic phosphate + choline. It carries out the reaction an N-(acyl)-sphingosylphosphoethanolamine = an N-(acyl)-sphingosyl-1,3-cyclic phosphate + ethanolamine. The enzyme catalyses a 1-acyl-sn-glycero-3-phosphocholine = a 1-acyl-sn-glycero-2,3-cyclic phosphate + choline. The catalysed reaction is a 1-acyl-sn-glycero-3-phosphoethanolamine = a 1-acyl-sn-glycero-2,3-cyclic phosphate + ethanolamine. Its function is as follows. Dermonecrotic toxins cleave the phosphodiester linkage between the phosphate and headgroup of certain phospholipids (sphingolipid and lysolipid substrates), forming an alcohol (often choline) and a cyclic phosphate. This toxin acts on sphingomyelin (SM). It may also act on ceramide phosphoethanolamine (CPE), lysophosphatidylcholine (LPC) and lysophosphatidylethanolamine (LPE), but not on lysophosphatidylserine (LPS), and lysophosphatidylglycerol (LPG). It acts by transphosphatidylation, releasing exclusively cyclic phosphate products as second products. Induces dermonecrosis, hemolysis, increased vascular permeability, edema, inflammatory response, and platelet aggregation. The polypeptide is Dermonecrotic toxin LarSicTox-alphaVII1 (Loxosceles arizonica (Arizona brown spider)).